A 227-amino-acid polypeptide reads, in one-letter code: Terpene cyclase ltmB (227 aa).

The next 7 membrane-spanning stretches (helical) occupy residues 20-40, 51-71, 76-96, 113-133, 135-155, 173-195, and 206-226; these read LAET…VLMI, MALI…IIYP, VELA…TSAA, AGLI…ALAM, IGPA…LSIG, LWSS…WRYW, and LILW…VCLL.

Belongs to the paxB family.

The protein resides in the membrane. Its pathway is secondary metabolite biosynthesis. Functionally, terpene cyclase; part of the gene cluster that mediates the biosynthesis of lolitrems, indole-diterpene mycotoxins that are potent tremorgens in mammals, and are synthesized by clavicipitaceous fungal endophytes in association with their grass hosts. The geranylgeranyl diphosphate (GGPP) synthase ltmG is proposed to catalyze the first step in lolitrem biosynthesis. LtmG catalyzes a series of iterative condensations of isopentenyl diphosphate (IPP) with dimethylallyl diphosphate (DMAPP), geranyl diphosphate (GPP), and farnesyl diphosphate (FPP), to form GGPP. GGPP then condenses with indole-3-glycerol phosphate to form 3-geranylgeranylindole, an acyclic intermediate, to be incorporated into paxilline. Either ltmG or ltmC could be responsible for this step, as both are putative prenyl transferases. The FAD-dependent monooxygenase ltmM then catalyzes the epoxidation of the two terminal alkenes of the geranylgeranyl moiety, which is subsequently cyclized by ltmB, to paspaline. The cytochrome P450 monooxygenases ltmQ and ltmP can sequentially oxidize paspaline to terpendole E and terpendole F. Alternatively, ltmP converts paspaline to an intermediate which is oxidized by ltmQ to terpendole F. LtmF, ltmK, ltmE and ltmJ appear to be unique to the epichloe endophytes. The prenyltransferase ltmF is involved in the 27-hydroxyl-O-prenylation. The cytochrome P450 monooxygenase ltmK is required for the oxidative acetal ring formation. The multi-functional prenyltransferase ltmE is required for C20- and C21-prenylations of the indole ring of paspalanes and acts together with the cytochrome P450 monooxygenase ltmJ to yield lolitremanes by multiple oxidations and ring closures. The stereoisomer pairs of lolitriol and lolitrem N or lolitrem B and lolitrem F may be attributed to variations in the way in which ring closure can occur under the action of ltmJ. While the major product of this pathway is lolitrem B, the prenyl transferases and cytochrome P450 monooxygenases identified in this pathway have a remarkable versatility in their regio- and stereo-specificities to generate a diverse range of metabolites that are products of a metabolic grid rather than a linear pathway. In Epichloe festucae var. lolii (Neotyphodium lolii), this protein is Terpene cyclase ltmB.